The primary structure comprises 210 residues: Uridine kinase (210 aa).

Residue 12–19 (GGSGSGKT) coordinates ATP.

It belongs to the uridine kinase family.

It is found in the cytoplasm. The enzyme catalyses uridine + ATP = UMP + ADP + H(+). It carries out the reaction cytidine + ATP = CMP + ADP + H(+). It participates in pyrimidine metabolism; CTP biosynthesis via salvage pathway; CTP from cytidine: step 1/3. The protein operates within pyrimidine metabolism; UMP biosynthesis via salvage pathway; UMP from uridine: step 1/1. The polypeptide is Uridine kinase (Leuconostoc citreum (strain KM20)).